We begin with the raw amino-acid sequence, 445 residues long: Sterile alpha motif domain-containing protein 7 (445 aa).

The segment at 98-172 (HAARAEMEMY…HLQGNPILLA (75 aa)) is required for localization to nuclear polycomb bodies. Residues 193–282 (YQKPPESDTE…WDDGKGKPSE (90 aa)) form a disordered region. Residues 227-244 (IKDPDIEVDNQQKPRVAD) show a composition bias toward basic and acidic residues. The SAM domain maps to 324–378 (WTVDDVYNFIRSLPGCSDYAQVFKDHAIDGETLPLLTEQHLRGTMGLKLGPALKI). Residues 425 to 445 (SIPGPQDLLSPKRTEQDVMRN) are disordered. The span at 434–445 (SPKRTEQDVMRN) shows a compositional bias: basic and acidic residues.

In terms of assembly, monomer, homodimer and homooligomer. Component of a Polycomb group (PcG) multiprotein PRC1-like complex. Interacts with PHC2 and NR2E3. Interacts with RNF1 in a PHC2-dependent manner. Interacts with SAMD11. In terms of tissue distribution, expressed in the retina and the pineal gland. In the retina, it is predominantly expressed in the outer nuclear layer and developing rod photoreceptors.

The protein localises to the nucleus. It is found in the cytoplasm. Functionally, component of a Polycomb group (PcG) multiprotein PRC1-like complex, essential for establishing rod photoreceptor cell identity and function by silencing nonrod gene expression in developing rod photoreceptor cells. Via its association with the PRC1-like complex, promotes epigenetic repressive marks H3K27me3 and H2AK119ub marks in nonrod genes, silencing their transcription. Represses Crx-controlled photoreceptor-specific gene expression. This chain is Sterile alpha motif domain-containing protein 7 (Samd7), found in Mus musculus (Mouse).